We begin with the raw amino-acid sequence, 102 residues long: UPF0751 protein Dhaf_1351 (102 aa).

Belongs to the UPF0751 family.

The sequence is that of UPF0751 protein Dhaf_1351 from Desulfitobacterium hafniense (strain DSM 10664 / DCB-2).